Here is a 123-residue protein sequence, read N- to C-terminus: Small ribosomal subunit protein uS12 (123 aa).

Asp-89 bears the 3-methylthioaspartic acid mark.

The protein belongs to the universal ribosomal protein uS12 family. In terms of assembly, part of the 30S ribosomal subunit. Contacts proteins S8 and S17. May interact with IF1 in the 30S initiation complex.

In terms of biological role, with S4 and S5 plays an important role in translational accuracy. Functionally, interacts with and stabilizes bases of the 16S rRNA that are involved in tRNA selection in the A site and with the mRNA backbone. Located at the interface of the 30S and 50S subunits, it traverses the body of the 30S subunit contacting proteins on the other side and probably holding the rRNA structure together. The combined cluster of proteins S8, S12 and S17 appears to hold together the shoulder and platform of the 30S subunit. The polypeptide is Small ribosomal subunit protein uS12 (Rhodospirillum centenum (strain ATCC 51521 / SW)).